Consider the following 189-residue polypeptide: Leucine repeat adapter protein 25 (189 aa).

Ser28 carries the post-translational modification Phosphoserine. A disordered region spans residues 55–81; sequence LSRAARAPDGPRHAAGSANLGSAAGPR. Positions 68-79 are enriched in low complexity; the sequence is AAGSANLGSAAG. The stretch at 86–114 is one LRR repeat; that stretch reads LDSALAALRKEMVGLRQLDMSLLCQLWGL. The segment at 141 to 174 is disordered; that stretch reads DSSYPPDAGLSDDDEPPDASLPPDPPPLTVPQTH. Pro residues predominate over residues 159-169; it reads ASLPPDPPPLT. At Ser188 the chain carries Phosphoserine.

The protein belongs to the FAM89 family. In terms of assembly, interacts with SKI. Interacts (via LRR repeat) with CDC42BPA (via AGC-kinase C-terminal domain) and CDC42BPB (via AGC-kinase C-terminal domain). Interacts (via LRR repeat) with LIMK1 (via LIM zinc-binding domains). Forms a tripartite complex with CDC42BPA, CDC42BPB and LIMK1.

It is found in the cytoplasm. Its subcellular location is the cell projection. It localises to the lamellipodium. Negatively regulates TGF-beta-induced signaling; in cooperation with SKI prevents the translocation of SMAD2 from the nucleus to the cytoplasm in response to TGF-beta. Acts as an adapter that mediates the specific recognition of LIMK1 by CDC42BPA and CDC42BPB in the lamellipodia. LRAP25-mediated CDC42BPA/CDC42BPB targeting to LIMK1 and the lamellipodium results in LIMK1 activation and the subsequent phosphorylation of CFL1 which is important for lamellipodial F-actin regulation. The protein is Leucine repeat adapter protein 25 of Rattus norvegicus (Rat).